Consider the following 71-residue polypeptide: Small ribosomal subunit protein bS21 (71 aa).

The disordered stretch occupies residues 39–71 (EKPTTVRKRAKAAAQKRHAKKLARENARRVRLY). The span at 43–59 (TVRKRAKAAAQKRHAKK) shows a compositional bias: basic residues. Basic and acidic residues predominate over residues 60-71 (LARENARRVRLY).

Belongs to the bacterial ribosomal protein bS21 family.

This Vibrio atlanticus (strain LGP32) (Vibrio splendidus (strain Mel32)) protein is Small ribosomal subunit protein bS21.